The following is a 99-amino-acid chain: Large ribosomal subunit protein uL23 (99 aa).

This sequence belongs to the universal ribosomal protein uL23 family. In terms of assembly, part of the 50S ribosomal subunit. Contacts protein L29, and trigger factor when it is bound to the ribosome.

Functionally, one of the early assembly proteins it binds 23S rRNA. One of the proteins that surrounds the polypeptide exit tunnel on the outside of the ribosome. Forms the main docking site for trigger factor binding to the ribosome. This Hydrogenobaculum sp. (strain Y04AAS1) protein is Large ribosomal subunit protein uL23.